Reading from the N-terminus, the 102-residue chain is Class I hydrophobin 1 (102 aa).

Positions Met1–Ala18 are cleaved as a signal peptide. Intrachain disulfides connect Cys37/Cys84, Cys45/Cys78, Cys46/Cys63, and Cys85/Cys97.

Belongs to the fungal hydrophobin family.

Its subcellular location is the secreted. It is found in the cell wall. Aerial growth, conidiation, and dispersal of filamentous fungi in the environment rely upon a capability of their secreting small amphipathic proteins called hydrophobins (HPBs) with low sequence identity. Class I can self-assemble into an outermost layer of rodlet bundles on aerial cell surfaces, conferring cellular hydrophobicity that supports fungal growth, development and dispersal; whereas Class II form highly ordered films at water-air interfaces through intermolecular interactions but contribute nothing to the rodlet structure. Hyd1 is essential for stress tolerance, conidial hydrophobicity, adhesion to insect cuticle, and insect infectivity/pathogenicity. Plays a neglectable role in hyphal growth and asexual development. The protein is Class I hydrophobin 1 of Metarhizium robertsii (strain ARSEF 23 / ATCC MYA-3075) (Metarhizium anisopliae (strain ARSEF 23)).